The primary structure comprises 126 residues: MRKQESEGANLEFESKSNDNGNVKIAPNDQSFLTILDDIKSSKSPAVINYGASWCGVCSQILPAFRKLSNSFSKLKFVYADIDECPETTRHIRYTPTFQFYRDGEKVDEMFGAGEQRLHDRLWLHS.

The disordered stretch occupies residues 1 to 24; it reads MRKQESEGANLEFESKSNDNGNVK. A Thioredoxin domain is found at 5 to 126; the sequence is ESEGANLEFE…RLHDRLWLHS (122 aa). Active-site nucleophile residues include cysteine 55 and cysteine 58. The cysteines at positions 55 and 58 are disulfide-linked.

Belongs to the thioredoxin family.

Functionally, probable thiol-disulfide oxidoreductase that may participate in various redox reactions. The polypeptide is Thioredoxin-like 3-3 (Arabidopsis thaliana (Mouse-ear cress)).